Consider the following 151-residue polypeptide: Small ribosomal subunit protein uS15 (151 aa).

The protein belongs to the universal ribosomal protein uS15 family.

The sequence is that of Small ribosomal subunit protein uS15 (RpS13) from Spodoptera frugiperda (Fall armyworm).